A 170-amino-acid chain; its full sequence is MDLKQYVTVVPDYPKEGVQFKDITTLMDKGEVYRYATDQIVEYAKERDIDLIVGPEARGFIIGCPVAYALGVGFAPVRKEGKLPREVVKVEYGLEYGKDVLTIHKDAIRPGQRVLITDDLLATGGTIEASIKLVEELGGVVAGIAFLIELTYLDGRKKLDGYDILTLMQY.

This sequence belongs to the purine/pyrimidine phosphoribosyltransferase family. As to quaternary structure, homodimer.

Its subcellular location is the cytoplasm. The enzyme catalyses AMP + diphosphate = 5-phospho-alpha-D-ribose 1-diphosphate + adenine. It participates in purine metabolism; AMP biosynthesis via salvage pathway; AMP from adenine: step 1/1. Its function is as follows. Catalyzes a salvage reaction resulting in the formation of AMP, that is energically less costly than de novo synthesis. This chain is Adenine phosphoribosyltransferase, found in Bacillus pumilus (strain SAFR-032).